The sequence spans 444 residues: tRNA modification GTPase MnmE (444 aa).

Residues arginine 22, glutamate 79, and arginine 118 each coordinate (6S)-5-formyl-5,6,7,8-tetrahydrofolate. In terms of domain architecture, TrmE-type G spans 214–368 (GMQVVLAGPP…LRDHLKSVMG (155 aa)). Asparagine 224 lines the K(+) pocket. Residues 224–229 (NAGKSS), 243–249 (TEVPGTT), and 268–271 (DTAG) contribute to the GTP site. Serine 228 is a Mg(2+) binding site. 3 residues coordinate K(+): threonine 243, valine 245, and threonine 248. Mg(2+) is bound at residue threonine 249. Lysine 444 is a binding site for (6S)-5-formyl-5,6,7,8-tetrahydrofolate.

The protein belongs to the TRAFAC class TrmE-Era-EngA-EngB-Septin-like GTPase superfamily. TrmE GTPase family. In terms of assembly, homodimer. Heterotetramer of two MnmE and two MnmG subunits. The cofactor is K(+).

The protein localises to the cytoplasm. In terms of biological role, exhibits a very high intrinsic GTPase hydrolysis rate. Involved in the addition of a carboxymethylaminomethyl (cmnm) group at the wobble position (U34) of certain tRNAs, forming tRNA-cmnm(5)s(2)U34. In Alkalilimnicola ehrlichii (strain ATCC BAA-1101 / DSM 17681 / MLHE-1), this protein is tRNA modification GTPase MnmE.